The chain runs to 368 residues: 3-isopropylmalate dehydrogenase (368 aa).

80-93 lines the NAD(+) pocket; it reads GPKWDNLEFSKKPE. Substrate is bound by residues R100, R110, R138, and D229. Mg(2+) is bound by residues D229, D253, and D257. 292-304 serves as a coordination point for NAD(+); it reads GSAPDIAGKEIAN.

This sequence belongs to the isocitrate and isopropylmalate dehydrogenases family. LeuB type 1 subfamily. In terms of assembly, homodimer. It depends on Mg(2+) as a cofactor. The cofactor is Mn(2+).

The protein resides in the cytoplasm. It catalyses the reaction (2R,3S)-3-isopropylmalate + NAD(+) = 4-methyl-2-oxopentanoate + CO2 + NADH. The protein operates within amino-acid biosynthesis; L-leucine biosynthesis; L-leucine from 3-methyl-2-oxobutanoate: step 3/4. Its function is as follows. Catalyzes the oxidation of 3-carboxy-2-hydroxy-4-methylpentanoate (3-isopropylmalate) to 3-carboxy-4-methyl-2-oxopentanoate. The product decarboxylates to 4-methyl-2 oxopentanoate. The sequence is that of 3-isopropylmalate dehydrogenase from Pelagibacter ubique (strain HTCC1062).